A 172-amino-acid polypeptide reads, in one-letter code: Shikimate kinase (172 aa).

11–16 is a binding site for ATP; the sequence is GAGKST. Serine 15 lines the Mg(2+) pocket. Substrate contacts are provided by aspartate 33, arginine 57, and glycine 79. Arginine 117 contributes to the ATP binding site. Substrate is bound at residue arginine 136. Arginine 153 contributes to the ATP binding site.

This sequence belongs to the shikimate kinase family. In terms of assembly, monomer. It depends on Mg(2+) as a cofactor.

The protein resides in the cytoplasm. It catalyses the reaction shikimate + ATP = 3-phosphoshikimate + ADP + H(+). It functions in the pathway metabolic intermediate biosynthesis; chorismate biosynthesis; chorismate from D-erythrose 4-phosphate and phosphoenolpyruvate: step 5/7. Functionally, catalyzes the specific phosphorylation of the 3-hydroxyl group of shikimic acid using ATP as a cosubstrate. The protein is Shikimate kinase of Pseudomonas paraeruginosa (strain DSM 24068 / PA7) (Pseudomonas aeruginosa (strain PA7)).